The primary structure comprises 694 residues: Polyribonucleotide nucleotidyltransferase (694 aa).

Mg(2+)-binding residues include Asp-485 and Asp-491. Positions 552–611 (PRIETMQIKPNKIATVIGPGGKQIRQIIEEAGVQIDINDSGLVSISASSPQAIEKAKSII) constitute a KH domain. The 69-residue stretch at 621 to 689 (GKIYEGRVTS…EKGQYKLSHK (69 aa)) folds into the S1 motif domain.

This sequence belongs to the polyribonucleotide nucleotidyltransferase family. It depends on Mg(2+) as a cofactor.

It localises to the cytoplasm. The catalysed reaction is RNA(n+1) + phosphate = RNA(n) + a ribonucleoside 5'-diphosphate. Involved in mRNA degradation. Catalyzes the phosphorolysis of single-stranded polyribonucleotides processively in the 3'- to 5'-direction. This chain is Polyribonucleotide nucleotidyltransferase, found in Chlamydia abortus (strain DSM 27085 / S26/3) (Chlamydophila abortus).